We begin with the raw amino-acid sequence, 386 residues long: MSVINMSDLDLAGKRVLIRSDLNVPVKDGKVTSDARIRASLPTIEAALKQGARVMVTSHLGRPTEGEYNEEFSLLPVVNYLKEHLKNPVRLAKDYLEGVDVAEGELVVLENVRFNKGEKKDDETLSKKYAALCDVYVMDAFGTAHRAQASTHGVGKFAPVACAGPLLSAELEALGKALKSPARPMVAVVGGSKVSTKFDVLNSLVKIADTVIVGGGIANTFVAIDNNVGKSLYEPDFVDAARKLRDEFKIPVPTDSRVGTEFSETAPATLKKVSEVNDDEEIMDFGDETALAMAKLLKEAKTILWNGPVGVFEFPNFRKGTEIVARAIADSEAFSIAGGGDTLAAIDLFGIEDKISYISTGGGAFLEFVEGKALPAVVMLEERAKQ.

Substrate contacts are provided by residues 21–23 (DLN), R36, 59–62 (HLGR), R113, and R146. ATP is bound by residues K197, E313, and 339–342 (GGDT).

It belongs to the phosphoglycerate kinase family. In terms of assembly, monomer.

The protein resides in the cytoplasm. The enzyme catalyses (2R)-3-phosphoglycerate + ATP = (2R)-3-phospho-glyceroyl phosphate + ADP. The protein operates within carbohydrate degradation; glycolysis; pyruvate from D-glyceraldehyde 3-phosphate: step 2/5. The polypeptide is Phosphoglycerate kinase (Serratia proteamaculans (strain 568)).